Reading from the N-terminus, the 597-residue chain is Alkyldihydroxyacetonephosphate synthase (597 aa).

The region spanning 131–313 (IPRLPDIVVW…SEVTIKIFPI (183 aa)) is the FAD-binding PCMH-type domain. Residues 163 to 169 (PIGGGTS), 232 to 238 (DSIEFST), 245 to 248 (TRAS), and 297 to 303 (EGTLGVV) contribute to the FAD site. Substrate is bound at residue Arg444. Tyr507 serves as the catalytic Proton donor/acceptor. The tract at residues 544-546 (HHH) is important for enzyme activity. Residues 595–597 (CKL) carry the Microbody targeting signal motif.

This sequence belongs to the FAD-binding oxidoreductase/transferase type 4 family. Homodimer. It depends on FAD as a cofactor.

The protein resides in the peroxisome. It carries out the reaction a long chain fatty alcohol + a 1-acylglycerone 3-phosphate = a 1-O-alkylglycerone 3-phosphate + a long-chain fatty acid + H(+). Its pathway is glycerolipid metabolism; ether lipid biosynthesis. Its function is as follows. Catalyzes the exchange of an acyl for a long-chain alkyl group and the formation of the ether bond in the biosynthesis of ether phospholipids. The sequence is that of Alkyldihydroxyacetonephosphate synthase (ads-1) from Caenorhabditis elegans.